The sequence spans 454 residues: Lamina-associated polypeptide 2, isoforms beta/gamma (454 aa).

The tract at residues 1–410 (MPEFLEDPSV…KSEKTKKGRS (410 aa)) is nucleoplasmic. In terms of domain architecture, LEM-like spans 5–48 (LEDPSVLTKDKLKSELVANNVTLPAGEQRKDVYVQLYLQHLTAR). Disordered stretches follow at residues 47 to 117 (ARNR…ELTN) and 149 to 265 (LREQ…VETS). Positions 49–108 (NRPPLPAGTNSKGPPDFSSDEEREPTPVLGSGAAAAGRSRAAVGRKATKKTDKPRQEDKD) are linker. Thr57 is modified (phosphothreonine). Ser59, Ser66, and Ser67 each carry phosphoserine. A Phosphothreonine modification is found at Thr74. A compositionally biased stretch (low complexity) spans 78–93 (GSGAAAAGRSRAAVGR). The residue at position 79 (Ser79) is a Phosphoserine. Residues Arg86 and Arg88 each carry the omega-N-methylarginine modification. Positions 97–106 (KKTDKPRQED) are enriched in basic and acidic residues. A compositionally biased stretch (acidic residues) spans 107 to 117 (KDDLDVTELTN). Residues 109-153 (DLDVTELTNEDLLDQLVKYGVNPGPIVGTTRKLYEKKLLKLREQG) form the LEM domain. The segment at 138-243 (TRKLYEKKLL…TSGSSKGGPL (106 aa)) is NAKAP95-binding N. Position 154 is a phosphothreonine (Thr154). The segment covering 155 to 178 (ESRSSTPLPTISSSAENTRQNGSN) has biased composition (polar residues). Ser156 and Ser159 each carry phosphoserine. Phosphothreonine is present on residues Thr160 and Thr164. Residues Ser166, Ser168, Ser177, Ser180, Ser184, and Ser190 each carry the phosphoserine modification. Residues 179 to 203 (DSDRYSDNEEDSKIELKLEKREPLK) are compositionally biased toward basic and acidic residues. Lys207 is subject to N6-acetyllysine. The residue at position 211 (Thr211) is a Phosphothreonine. Residues 220–237 (NQSYSQAGITETEWTSGS) are compositionally biased toward polar residues. 7 positions are modified to phosphoserine: Ser222, Ser224, Ser250, Ser254, Ser265, Ser292, and Ser306. Residues 299-371 (TGNFKHASPI…SCRRPIKGAA (73 aa)) form a binds lamins B region. The NAKAP95-binding C stretch occupies residues 300 to 374 (GNFKHASPIL…RPIKGAAGRP (75 aa)). Thr312 is modified (phosphothreonine). Ser315 bears the Phosphoserine mark. Residue Arg320 is modified to Citrulline. Residues Ser362, Ser378, and Ser385 each carry the phosphoserine modification. Residue Lys389 is modified to N6-acetyllysine. Lys401 participates in a covalent cross-link: Glycyl lysine isopeptide (Lys-Gly) (interchain with G-Cter in SUMO2). Ser402 carries the phosphoserine modification. Residues 411–434 (IPVWIKILLFVVVAVFLFLVYQAM) traverse the membrane as a helical; Signal-anchor for type II membrane protein segment. The Lumenal portion of the chain corresponds to 435-454 (ETNQVNPFSNFLHVDPRKSN).

The protein belongs to the LEM family. Interacts with LMNB1, LMNB2, BANF1, AKAP8L, GMCL and chromosomes. Isoform Zeta interacts with BANF1/BAF and may sequester it in the cytoplasm. Post-translationally, mitosis-specific phosphorylation specifically abolishes its binding to lamin B and chromosomes. Citrullinated by PADI4. As to expression, expressed in many tissues. Most abundant in adult thymus and fetal liver.

Its subcellular location is the nucleus inner membrane. It localises to the cytoplasm. Its function is as follows. May help direct the assembly of the nuclear lamina and thereby help maintain the structural organization of the nuclear envelope. Possible receptor for attachment of lamin filaments to the inner nuclear membrane. May be involved in the control of initiation of DNA replication through its interaction with NAKAP95. In terms of biological role, thymopoietin (TP) and Thymopentin (TP5) may play a role in T-cell development and function. TP5 is an immunomodulating pentapeptide. This is Lamina-associated polypeptide 2, isoforms beta/gamma (TMPO) from Homo sapiens (Human).